The primary structure comprises 496 residues: 1-aminocyclopropane-1-carboxylate synthase 2 (496 aa).

The substrate site is built by glutamate 55 and tyrosine 93. Lysine 279 is subject to N6-(pyridoxal phosphate)lysine. Phosphoserine is present on residues serine 483, serine 488, and serine 491.

It belongs to the class-I pyridoxal-phosphate-dependent aminotransferase family. As to quaternary structure, homodimer and heterodimer. In vivo, the relevance of heterodimerization with other ACS enzymes is however unsure. Interacts with GRF3. Pyridoxal 5'-phosphate is required as a cofactor. Phosphorylated on serine residue by MAP kinase (MPK6). Post-translationally, may be processed at its C-terminus. In terms of tissue distribution, high in developing leaves and in flowers. Expressed in roots and siliques.

It carries out the reaction S-adenosyl-L-methionine = 1-aminocyclopropane-1-carboxylate + S-methyl-5'-thioadenosine + H(+). The protein operates within alkene biosynthesis; ethylene biosynthesis via S-adenosyl-L-methionine; ethylene from S-adenosyl-L-methionine: step 1/2. Its function is as follows. 1-aminocyclopropane-1-carboxylate synthase (ACS) enzymes catalyze the conversion of S-adenosyl-L-methionine (SAM) into 1-aminocyclopropane-1-carboxylate (ACC), a direct precursor of ethylene. In Arabidopsis thaliana (Mouse-ear cress), this protein is 1-aminocyclopropane-1-carboxylate synthase 2 (ACS2).